The primary structure comprises 544 residues: Phenylalanine--tRNA ligase beta subunit (544 aa).

Residues 270-346 (LEPKTRFLTK…KGYGYENIKV (77 aa)) form the B5 domain. Mg(2+)-binding residues include Asp-324, Asp-330, Glu-333, and Asp-334.

It belongs to the phenylalanyl-tRNA synthetase beta subunit family. Type 2 subfamily. In terms of assembly, tetramer of two alpha and two beta subunits. It depends on Mg(2+) as a cofactor.

It localises to the cytoplasm. It catalyses the reaction tRNA(Phe) + L-phenylalanine + ATP = L-phenylalanyl-tRNA(Phe) + AMP + diphosphate + H(+). This chain is Phenylalanine--tRNA ligase beta subunit, found in Methanosarcina barkeri (strain Fusaro / DSM 804).